The chain runs to 935 residues: Peptidyl-glycine alpha-amidating monooxygenase A (935 aa).

Positions 1–36 (MASLSSSFLVLFLLFQNSCYCFRSPLSVFKRYEEST) are cleaved as a signal peptide. Residues 1-390 (MASLSSSFLV…KREEEEVLDQ (390 aa)) form a peptidylglycine alpha-hydroxylating monooxygenase region. Over 37-825 (RSLSNDCLGT…VQESSAGVSF (789 aa)) the chain is Intragranular. 5 cysteine pairs are disulfide-bonded: Cys-43/Cys-182, Cys-77/Cys-122, Cys-110/Cys-127, Cys-223/Cys-330, and Cys-289/Cys-311. 2 residues coordinate Cu(2+): His-103 and His-104. His-168, His-238, His-240, and Met-310 together coordinate Cu(2+). The interval 362-385 (HGHHHTEAEPEKNTGLQQPKREEE) is disordered. Positions 391–712 (DVHLEEDTDW…SPSKAEHRSV (322 aa)) are peptidyl-alpha-hydroxyglycine alpha-amidating lyase. Arg-426 contributes to the a protein binding site. NHL repeat units lie at residues 463–504 (SKVL…LGAG), 512–557 (LGRA…FSPN), and 565–609 (GEET…FHAE). 2 disulfides stabilise this stretch: Cys-526–Cys-547 and Cys-594–Cys-605. Residues Tyr-546 and Arg-598 each coordinate a protein. Asn-658 is a glycosylation site (N-linked (GlcNAc...) asparagine). The stretch at 662–705 (GDILDTFIPARKNFDMPHDIAAADDGTVYVGDAHANAVWKFSPS) is one NHL 4 repeat. The segment covering 728 to 751 (FETHIRSRPKTNESVEKQTQEKQQ) has biased composition (basic and acidic residues). Disordered stretches follow at residues 728-764 (FETHIRSRPKTNESVEKQTQEKQQKQKNSAGVSTQEK) and 778-812 (QEKQNVVQESSAGVPTQEKQSVVQESSAGVSTQEK). N-linked (GlcNAc...) asparagine glycosylation occurs at Asn-739. Residues 755–764 (NSAGVSTQEK) are compositionally biased toward polar residues. Residues 826 to 846 (VLIITLLIIPIAVLIAIAIFI) traverse the membrane as a helical segment. The Cytoplasmic segment spans residues 847 to 935 (RWRKVRMYGG…PIPPAPVSSS (89 aa)). Residues 896–935 (KGFDRLSTEGSDQEKDDDDGSDSEEEYSAPPIPPAPVSSS) are disordered. Over residues 909–922 (EKDDDDGSDSEEEY) the composition is skewed to acidic residues. The segment covering 925–935 (PPIPPAPVSSS) has biased composition (pro residues).

This sequence in the C-terminal section; belongs to the peptidyl-alpha-hydroxyglycine alpha-amidating lyase family. In the N-terminal section; belongs to the copper type II ascorbate-dependent monooxygenase family. In terms of assembly, monomer. Zn(2+) is required as a cofactor. Requires Cu(2+) as cofactor.

The protein resides in the cytoplasmic vesicle. The protein localises to the secretory vesicle membrane. It catalyses the reaction a [peptide]-C-terminal glycine + 2 L-ascorbate + O2 = a [peptide]-C-terminal (2S)-2-hydroxyglycine + 2 monodehydro-L-ascorbate radical + H2O. The catalysed reaction is a [peptide]-C-terminal (2S)-2-hydroxyglycine = a [peptide]-C-terminal amide + glyoxylate. In terms of biological role, bifunctional enzyme that catalyzes amidation of the C-terminus of proteins. Alpha-amidation is present at the C-terminus of many endocrine hormones and neuropeptides and is required for their activity. C-terminal amidation also takes place in response to protein fragmentation triggered by oxidative stress, promoting degradation of amidated protein fragments by the proteasome. Alpha-amidation involves two sequential reactions, both of which are catalyzed by separate catalytic domains of the enzyme. The first step, catalyzed by peptidyl alpha-hydroxylating monooxygenase (PHM) domain, is the copper-, ascorbate-, and O2- dependent stereospecific hydroxylation (with S stereochemistry) at the alpha-carbon (C-alpha) of the C-terminal glycine of the peptidylglycine substrate. The second step, catalyzed by the peptidylglycine amidoglycolate lyase (PAL) domain, is the zinc-dependent cleavage of the N-C-alpha bond, producing the alpha-amidated peptide and glyoxylate. The protein is Peptidyl-glycine alpha-amidating monooxygenase A (pam-a) of Xenopus laevis (African clawed frog).